The following is a 403-amino-acid chain: cAMP-dependent protein kinase regulatory subunit (403 aa).

The interval 1–155 (MADYTIPSEL…RIQASIGNNF (155 aa)) is dimerization and phosphorylation. The interval 79–125 (YAYSTDDGFGTEDDDDDDDDEDDEAAIPPPVVNRGRRTSVSAESMAP) is disordered. The segment covering 87-103 (FGTEDDDDDDDDEDDEA) has biased composition (acidic residues). Ser-117 carries the post-translational modification Phosphoserine. Residues 156–278 (LFRN…EEVP), Glu-226, Arg-235, 279–403 (LLSS…PGEH), Glu-349, and Arg-358 contribute to the 3',5'-cyclic AMP site.

Belongs to the cAMP-dependent kinase regulatory chain family. Tetramer, composed of 2 regulatory (R) and 2 catalytic (C) subunits. In the presence of cAMP it dissociates into 2 active monomeric C subunits and an R dimer that binds four cAMP molecules.

The sequence is that of cAMP-dependent protein kinase regulatory subunit (PKAR) from Blastocladiella emersonii (Aquatic fungus).